The primary structure comprises 636 residues: 1-phosphatidylinositol 4,5-bisphosphate phosphodiesterase zeta-1 (636 aa).

Residues 35–70 form the EF-hand domain; it reads CNTIHVKCIFKDNDRLKQGRITIEEFRTIYRIIAHR. In terms of domain architecture, PI-PLC X-box spans 155 to 299; the sequence is QDMTHPLSDY…LKFKILVRNK (145 aa). Active-site residues include H170 and H215. The disordered stretch occupies residues 311-338; that stretch reads KGFDKHGQVQECEEEEEAEQEEEENEVR. A coiled-coil region spans residues 318–345; that stretch reads QVQECEEEEEAEQEEEENEVRDSEILDI. Residues 321-336 are compositionally biased toward acidic residues; sequence ECEEEEEAEQEEEENE. The PI-PLC Y-box domain occupies 375–491; that stretch reads LSDLVIYTKV…GYILKPHFLR (117 aa). The region spanning 491–617 is the C2 domain; the sequence is RDGKSIFNPN…KGYRRVPLFS (127 aa).

As to quaternary structure, interacts via its C2 domain with PtdIns(3)P and, to a lesser extent, PtdIns(5)P in vitro. Ca(2+) is required as a cofactor. Expressed specifically in testis.

It localises to the nucleus. The protein resides in the cytoplasm. The protein localises to the perinuclear region. It catalyses the reaction a 1,2-diacyl-sn-glycero-3-phospho-(1D-myo-inositol-4,5-bisphosphate) + H2O = 1D-myo-inositol 1,4,5-trisphosphate + a 1,2-diacyl-sn-glycerol + H(+). In terms of biological role, the production of the second messenger molecules diacylglycerol (DAG) and inositol 1,4,5-trisphosphate (IP3) is mediated by activated phosphatidylinositol-specific phospholipase C enzymes. In vitro, hydrolyzes PtdIns(4,5)P2 in a Ca(2+)-dependent manner. Triggers intracellular Ca(2+) oscillations in oocytes solely during M phase and is involved in inducing oocyte activation and initiating embryonic development up to the blastocyst stage. Is therefore a strong candidate for the egg-activating soluble sperm factor that is transferred from the sperm into the egg cytoplasm following gamete membrane fusion. May exert an inhibitory effect on phospholipase-C-coupled processes that depend on calcium ions and protein kinase C, including CFTR trafficking and function. The protein is 1-phosphatidylinositol 4,5-bisphosphate phosphodiesterase zeta-1 of Sus scrofa (Pig).